We begin with the raw amino-acid sequence, 121 residues long: Autophagy-related protein 8 (121 aa).

Residue Gly-116 is the site of Phosphatidylethanolamine amidated glycine attachment. The propeptide at 117–121 is removed in mature form; it reads DFETA.

The protein belongs to the ATG8 family. The C-terminal 5 residues are removed to expose Gly-116 at the C-terminus. The C-terminal Gly is then amidated with phosphatidylethanolamine by an activating system similar to that for ubiquitin.

It is found in the cytoplasmic vesicle. It localises to the autophagosome membrane. Its subcellular location is the vacuole membrane. Functionally, ubiquitin-like modifier involved in autophagosome formation. With cpr-1/atg4, mediates the delivery of the autophagosomes to the vacuole via the microtubule cytoskeleton. Required for selective autophagic degradation of the nucleus (nucleophagy) as well as for mitophagy which contributes to regulate mitochondrial quantity and quality by eliminating the mitochondria to a basal level to fulfill cellular energy requirements and preventing excess ROS production. Also participates in membrane fusion events that take place in the early secretory pathway. Also involved in endoplasmic reticulum-specific autophagic process and is essential for the survival of cells subjected to severe ER stress. The apg-6/atg8-PE conjugate mediates tethering between adjacent membranes and stimulates membrane hemifusion, leading to expansion of the autophagosomal membrane during autophagy. The protein is Autophagy-related protein 8 (apg-6) of Neurospora crassa (strain ATCC 24698 / 74-OR23-1A / CBS 708.71 / DSM 1257 / FGSC 987).